Reading from the N-terminus, the 375-residue chain is MYLSELQLNHYRNYESVDVHFSPDTNVLIGENAQGKTNLLEAIYVLALARSHRTNTDRELIQWHEDFAKITGLVQRSAGKTPLELVLSQKGKKAKVNHLEQAKLSQYIGQLNVVLFAPEDLNIVKGSPAVRRHFIDMEFGQMSSKYLYNISQYKSILKQRNQYLKQLQRRQAKDLVYLGVLSDQLAAYGAEVTVARRQFLQQMEKWAQKLHQEITKDREVLTFKYQSQIPEEQLDQSVEELYQQFQTLYEKQQIREVEQGTTLIGPHRDDVQFLVNDKDVQAFGSQGQQRTTALSVKLAEIDLMKAQTGEYPILLLDDVLSELDDLRQTHLLKTFQNKVQTFLTTTSLENVKKEIIATPRVFTVTNGVVIEEQAE.

ATP is bound at residue 30–37; it reads GENAQGKT.

Belongs to the RecF family.

The protein localises to the cytoplasm. The RecF protein is involved in DNA metabolism; it is required for DNA replication and normal SOS inducibility. RecF binds preferentially to single-stranded, linear DNA. It also seems to bind ATP. This chain is DNA replication and repair protein RecF, found in Latilactobacillus sakei subsp. sakei (strain 23K) (Lactobacillus sakei subsp. sakei).